Reading from the N-terminus, the 291-residue chain is Transcription initiation factor IIE subunit beta (291 aa).

Methionine 1 carries the N-acetylmethionine modification. Positions 1–13 (MDPSLLRERELFK) are enriched in basic and acidic residues. The interval 1-63 (MDPSLLRERE…NSDHSNGSFN (63 aa)) is disordered. Over residues 50 to 62 (GSKQNSDHSNGSF) the composition is skewed to polar residues. Position 61 is a phosphoserine (serine 61). Positions 66 to 146 (ALSGSSGYKF…YAFKPKYNVR (81 aa)) form a DNA-binding region, TFIIE beta. Lysine 74 is modified (N6-acetyllysine). Residues 243-272 (SSMQESGPKKVAPIQRRKKPASQKKRRFKT) are disordered. Basic residues predominate over residues 257-271 (QRRKKPASQKKRRFK).

Belongs to the TFIIE beta subunit family. Tetramer of two alpha and two beta chains. Interacts with FACT subunit SUPT16H. Interacts with ATF7IP. Interacts with SND1. Part of TBP-based Pol II pre-initiation complex (PIC), in which Pol II core assembles with general transcription factors and other specific initiation factors including GTF2E1, GTF2E2, GTF2F1, GTF2F2, TCEA1, ERCC2, ERCC3, GTF2H2, GTF2H3, GTF2H4, GTF2H5, GTF2A1, GTF2A2, GTF2B and TBP; this large multi-subunit PIC complex mediates DNA unwinding and targets Pol II core to the transcription start site where the first phosphodiester bond forms.

It is found in the nucleus. Functionally, recruits TFIIH to the initiation complex and stimulates the RNA polymerase II C-terminal domain kinase and DNA-dependent ATPase activities of TFIIH. Both TFIIH and TFIIE are required for promoter clearance by RNA polymerase. The protein is Transcription initiation factor IIE subunit beta (GTF2E2) of Homo sapiens (Human).